The chain runs to 437 residues: Transcription factor 12 (437 aa).

3 disordered regions span residues E1–D68, P80–S123, and A244–M335. The span at V13 to P37 shows a compositional bias: polar residues. T44 bears the Phosphothreonine mark. S64 is modified (phosphoserine). Over residues T83–P94 the composition is skewed to low complexity. Composition is skewed to polar residues over residues V95–W107 and A114–S123. 2 stretches are compositionally biased toward basic and acidic residues: residues I273–H285 and D291–V306. Residue K274 forms a Glycyl lysine isopeptide (Lys-Gly) (interchain with G-Cter in SUMO2) linkage. S295 carries the post-translational modification Phosphoserine. A Glycyl lysine isopeptide (Lys-Gly) (interchain with G-Cter in SUMO2) cross-link involves residue K305. The residue at position 312 (T312) is a Phosphothreonine. S313 and S314 each carry phosphoserine. A compositionally biased stretch (basic and acidic residues) spans P323–M335. The bHLH domain maps to E332–L385. Residues K364 and K408 each participate in a glycyl lysine isopeptide (Lys-Gly) (interchain with G-Cter in SUMO2) cross-link. A class A specific domain region spans residues Q387–S410. The segment at E405–L437 is disordered. A compositionally biased stretch (low complexity) spans P416–L427. Over residues S428–L437 the composition is skewed to polar residues.

As to quaternary structure, efficient DNA binding requires dimerization with another bHLH protein. Forms homo- or heterooligomers with myogenin, E12 and ITF2 proteins. Interacts with NEUROD2. Interacts with PTF1A. Interacts with RUNX1T1. Interacts with BHLHA9.

The protein resides in the nucleus. Transcriptional regulator. Involved in the initiation of neuronal differentiation. Activates transcription by binding to the E box (5'-CANNTG-3'). Participates in the control of inducible RP4 gene expression in salivary cells. Binds to the RIPE3 element of the insulin II promoter. May be involved in the functional network that regulates the development of the GnRH axis. This chain is Transcription factor 12 (TCF12), found in Mesocricetus auratus (Golden hamster).